The chain runs to 455 residues: Chromosomal replication initiator protein DnaA 2 (455 aa).

The domain I, interacts with DnaA modulators stretch occupies residues 1 to 95 (MLTCNDCSTW…KRSSPLVTPS (95 aa)). A domain II region spans residues 96–112 (IAKPATEVSEENKDFQL). A domain III, AAA+ region region spans residues 113–328 (KLNGAYRFDN…GAINKLTAYC (216 aa)). Gly-157, Gly-159, Lys-160, and Thr-161 together coordinate ATP. Residues 329 to 455 (LLFNKPLTET…IAIDSPQHFV (127 aa)) are domain IV, binds dsDNA.

This sequence belongs to the DnaA family. As to quaternary structure, oligomerizes as a right-handed, spiral filament on DNA at oriC.

The protein localises to the cytoplasm. Functionally, plays an essential role in the initiation and regulation of chromosomal replication. ATP-DnaA binds to the origin of replication (oriC) to initiate formation of the DNA replication initiation complex once per cell cycle. Binds the DnaA box (a 9 base pair repeat at the origin) and separates the double-stranded (ds)DNA. Forms a right-handed helical filament on oriC DNA; dsDNA binds to the exterior of the filament while single-stranded (ss)DNA is stabiized in the filament's interior. The ATP-DnaA-oriC complex binds and stabilizes one strand of the AT-rich DNA unwinding element (DUE), permitting loading of DNA polymerase. After initiation quickly degrades to an ADP-DnaA complex that is not apt for DNA replication. Binds acidic phospholipids. This Chlamydia trachomatis serovar D (strain ATCC VR-885 / DSM 19411 / UW-3/Cx) protein is Chromosomal replication initiator protein DnaA 2.